The chain runs to 907 residues: Leucine-rich repeat-containing G-protein coupled receptor 5 (907 aa).

The first 21 residues, 1–21, serve as a signal peptide directing secretion; that stretch reads MDTSCVHMLLSLLALLQLVAA. At 22–561 the chain is on the extracellular side; that stretch reads GSSPGPDAIP…EHLFGSWLIR (540 aa). One can recognise an LRRNT domain in the interval 25 to 66; that stretch reads PGPDAIPRGCPSHCHCELDGRMLLRVDCSDLGLSELPSNLSV. 2 disulfides stabilise this stretch: Cys34–Cys40 and Cys38–Cys52. N-linked (GlcNAc...) asparagine glycans are attached at residues Asn63 and Asn77. LRR repeat units follow at residues 67 to 88, 91 to 112, 115 to 136, 139 to 160, 163 to 184, 187 to 208, 211 to 232, 235 to 256, 258 to 279, 282 to 303, 306 to 325, 329 to 350, 353 to 374, 375 to 396, 399 to 420, and 423 to 446; these read FTSY…LLHR, FLEE…AFTG, SLKV…ALQN, SLQS…CFSG, SLRH…AFRS, ALQA…AFGN, SLVV…CFDG, SLET…IKTL, NLKE…AFVG, SLIT…AFQH, ELRT…PHLT, TLES…VCDQ, NLQV…SGCQ, KLQK…TFQQ, NLRS…AFST, and SLIK…HGLT. Asn208 carries an N-linked (GlcNAc...) asparagine glycan. A disulfide bridge connects residues Cys348 and Cys373. A disulfide bond links Cys479 and Cys541. The helical transmembrane segment at 562–582 threads the bilayer; that stretch reads IGVWTTAVLALSCNALVALTV. Topologically, residues 583 to 593 are cytoplasmic; that stretch reads FRTPLYISSIK. A helical transmembrane segment spans residues 594–614; that stretch reads LLIGVIAVVDILMGVSSAVLA. The Extracellular segment spans residues 615–638; sequence AVDAFTFGRFAQHGAWWEDGIGCQ. Residues Cys637 and Cys712 are joined by a disulfide bond. A helical membrane pass occupies residues 639-659; the sequence is IVGFLSIFASESSIFLLTLAA. The Cytoplasmic segment spans residues 660–682; the sequence is LERGFSVKCSSKFEVKAPLFSLR. The chain crosses the membrane as a helical span at residues 683 to 703; sequence AIVLLCVLLALTIATIPLLGG. Over 704 to 723 the chain is Extracellular; that stretch reads SKYNASPLCLPLPFGEPSTT. A helical membrane pass occupies residues 724–744; it reads GYMVALVLLNSLCFLIMTIAY. The Cytoplasmic segment spans residues 745–767; that stretch reads TKLYCSLEKGELENLWDCSMVKH. Residues 768–788 form a helical membrane-spanning segment; sequence IALLLFANCILYCPVAFLSFS. Residues 789–802 are Extracellular-facing; that stretch reads SLLNLTFISPDVIK. Asn792 carries an N-linked (GlcNAc...) asparagine glycan. Residues 803–823 traverse the membrane as a helical segment; the sequence is FILLVIVPLPSCLNPLLYIVF. The Cytoplasmic segment spans residues 824–907; that stretch reads NPHFKEDMGS…LSSVAFVPCL (84 aa).

This sequence belongs to the G-protein coupled receptor 1 family. In terms of assembly, identified in a complex composed of RNF43, LGR5 and RSPO1. Also interacts with other R-spondin ligands, including RSPO2, RSPO3 and RSPO4. As to expression, expressed in the intestinal epithelium (at protein level). Expressed in the gonads, the adrenal gland, and in the brain. In the central nervous system expression is restricted to the olfactory bulb. In the adrenal gland detected only in the neural-crest derived chromaffin cells of the medulla, but not in the cells of the adrenal cortex. In the gonads, the expression is high in Graafian follicle, but absent from primary and secondary follicles. In the intestine, exclusively expressed in cycling crypt base columnar cells. Expressed in the lower bulge and secondary germ area of telogen hair follicles and in the lower outer root sheath of anagen hair follicle.

It localises to the cell membrane. The protein localises to the golgi apparatus. Its subcellular location is the trans-Golgi network membrane. Functionally, receptor for R-spondins that potentiates the canonical Wnt signaling pathway and acts as a stem cell marker of the intestinal epithelium and the hair follicle. Upon binding to R-spondins (RSPO1, RSPO2, RSPO3 or RSPO4), associates with phosphorylated LRP6 and frizzled receptors that are activated by extracellular Wnt receptors, triggering the canonical Wnt signaling pathway to increase expression of target genes. In contrast to classical G-protein coupled receptors, does not activate heterotrimeric G-proteins to transduce the signal. Involved in the development and/or maintenance of the adult intestinal stem cells during postembryonic development. The chain is Leucine-rich repeat-containing G-protein coupled receptor 5 (Lgr5) from Mus musculus (Mouse).